The chain runs to 467 residues: Nuclear distribution protein nudF (467 aa).

A LisH domain is found at 9–41 (QAEELHKSIIAYLASVNLTESSAALRAELGDSV). A coiled-coil region spans residues 60-87 (TSVVRLQKKIMDLESRCAALQSELDSAT). WD repeat units follow at residues 113 to 154 (GHRN…RTVK), 156 to 196 (HTKA…KNIR), 200 to 247 (GHDH…CVKT), 250 to 289 (GHVDWVRAVAPSIDGRFLLAAGDDRIPRLWDLSSAETKST), 292 to 352 (GHEH…IKTL), 354 to 393 (GHDNWVRALAFHPGGKHLLSVADDKTIRCWDLTQECKCVR), 398 to 428 (AHGHFVTCLRWAPPLIKDGGANGEAETNGTP), and 429 to 466 (AATSTTNGVRPDPNVATKISIRCVIATGSVDQKVRIFA). Positions 417 to 439 (GANGEAETNGTPAATSTTNGVRP) are disordered. Residues 422–436 (AETNGTPAATSTTNG) are compositionally biased toward polar residues.

Belongs to the WD repeat LIS1/nudF family. Self-associates. Interacts with nudE and dynein.

It localises to the cytoplasm. Its subcellular location is the cytoskeleton. The protein resides in the spindle pole. In terms of biological role, positively regulates the activity of the minus-end directed microtubule motor protein dynein. May enhance dynein-mediated microtubule sliding by targeting dynein to the microtubule plus end. Required for nuclear migration during vegetative growth as well as development. Required for retrograde early endosome (EE) transport from the hyphal tip. Required for localization of dynein to the mitotic spindle poles. Recruits additional proteins to the dynein complex at SPBs. The polypeptide is Nuclear distribution protein nudF (Aspergillus fumigatus (strain CBS 144.89 / FGSC A1163 / CEA10) (Neosartorya fumigata)).